The following is a 226-amino-acid chain: Urease accessory protein UreF (226 aa).

Belongs to the UreF family. In terms of assembly, ureD, UreF and UreG form a complex that acts as a GTP-hydrolysis-dependent molecular chaperone, activating the urease apoprotein by helping to assemble the nickel containing metallocenter of UreC. The UreE protein probably delivers the nickel.

It localises to the cytoplasm. Required for maturation of urease via the functional incorporation of the urease nickel metallocenter. The protein is Urease accessory protein UreF of Burkholderia multivorans (strain ATCC 17616 / 249).